The sequence spans 208 residues: Uracil phosphoribosyltransferase (208 aa).

5-phospho-alpha-D-ribose 1-diphosphate-binding positions include Arg78, Arg103, and 130-138; that span reads DPMLATANS. Residues Ile193 and 198-200 each bind uracil; that span reads GDA. Asp199 is a 5-phospho-alpha-D-ribose 1-diphosphate binding site.

The protein belongs to the UPRTase family. Requires Mg(2+) as cofactor.

It carries out the reaction UMP + diphosphate = 5-phospho-alpha-D-ribose 1-diphosphate + uracil. It participates in pyrimidine metabolism; UMP biosynthesis via salvage pathway; UMP from uracil: step 1/1. With respect to regulation, allosterically activated by GTP. Functionally, catalyzes the conversion of uracil and 5-phospho-alpha-D-ribose 1-diphosphate (PRPP) to UMP and diphosphate. The protein is Uracil phosphoribosyltransferase of Brucella ovis (strain ATCC 25840 / 63/290 / NCTC 10512).